Consider the following 187-residue polypeptide: CASP-like protein 2 (187 aa).

Over methionine 1 to glycine 24 the chain is Cytoplasmic. Residues leucine 25–leucine 45 form a helical membrane-spanning segment. Residues serine 46–threonine 72 lie on the Extracellular side of the membrane. Residues phenylalanine 73–leucine 93 traverse the membrane as a helical segment. Residues serine 94–arginine 108 are Cytoplasmic-facing. The helical transmembrane segment at isoleucine 109–alanine 129 threads the bilayer. The Extracellular segment spans residues glycine 130 to leucine 163. The chain crosses the membrane as a helical span at residues isoleucine 164–isoleucine 184. Topologically, residues serine 185–histidine 187 are cytoplasmic.

The protein belongs to the Casparian strip membrane proteins (CASP) family. As to quaternary structure, homodimer and heterodimers.

The protein localises to the cell membrane. In Lotus japonicus (Lotus corniculatus var. japonicus), this protein is CASP-like protein 2.